The sequence spans 277 residues: Ubiquinone biosynthesis protein COQ4, mitochondrial (277 aa).

The N-terminal 14 residues, 1 to 14 (MLTKRALRTTDPYR), are a transit peptide targeting the mitochondrion. Histidine 157, aspartate 158, histidine 161, and glutamate 173 together coordinate Zn(2+).

This sequence belongs to the COQ4 family. Component of a multi-subunit COQ enzyme complex, composed of at least COQ3, COQ4, COQ5, COQ6, COQ7 and COQ9. Zn(2+) is required as a cofactor.

It is found in the mitochondrion inner membrane. It carries out the reaction a 4-hydroxy-3-methoxy-5-(all-trans-polyprenyl)benzoate + H(+) = a 2-methoxy-6-(all-trans-polyprenyl)phenol + CO2. Its pathway is cofactor biosynthesis; ubiquinone biosynthesis. Lyase that catalyzes the C1-decarboxylation of 4-hydroxy-3-methoxy-5-(all-trans-polyprenyl)benzoic acid into 2-methoxy-6-(all-trans-polyprenyl)phenol during ubiquinone biosynthesis. The polypeptide is Ubiquinone biosynthesis protein COQ4, mitochondrial (Ajellomyces capsulatus (strain G186AR / H82 / ATCC MYA-2454 / RMSCC 2432) (Darling's disease fungus)).